Reading from the N-terminus, the 181-residue chain is Putative manganese efflux pump MntP (181 aa).

The next 6 helical transmembrane spans lie at 4 to 24 (VVLL…GLGA), 31 to 51 (VVLG…MPLI), 59 to 79 (MLGW…ALIA), 102 to 122 (VLLL…FALT), 129 to 149 (LVSC…GVFI), and 161 to 181 (AELA…AVAV).

This sequence belongs to the MntP (TC 9.B.29) family.

The protein localises to the cell inner membrane. Probably functions as a manganese efflux pump. This is Putative manganese efflux pump MntP from Saccharophagus degradans (strain 2-40 / ATCC 43961 / DSM 17024).